The sequence spans 250 residues: ATP synthase subunit a (250 aa).

6 helical membrane passes run 26 to 46 (FTNA…FLYL), 84 to 104 (FFPM…LGMF), 114 to 134 (IIVT…YGFY), 143 to 163 (LFVP…IEVI), 193 to 213 (FVAS…LPLI), and 216 to 236 (VALT…FAVL).

This sequence belongs to the ATPase A chain family. In terms of assembly, F-type ATPases have 2 components, CF(1) - the catalytic core - and CF(0) - the membrane proton channel. CF(1) has five subunits: alpha(3), beta(3), gamma(1), delta(1), epsilon(1). CF(0) has three main subunits: a(1), b(2) and c(9-12). The alpha and beta chains form an alternating ring which encloses part of the gamma chain. CF(1) is attached to CF(0) by a central stalk formed by the gamma and epsilon chains, while a peripheral stalk is formed by the delta and b chains.

It localises to the cell inner membrane. Key component of the proton channel; it plays a direct role in the translocation of protons across the membrane. This is ATP synthase subunit a from Sinorhizobium fredii (strain NBRC 101917 / NGR234).